We begin with the raw amino-acid sequence, 89 residues long: Small ribosomal subunit protein uS15 (89 aa).

It belongs to the universal ribosomal protein uS15 family. As to quaternary structure, part of the 30S ribosomal subunit. Forms a bridge to the 50S subunit in the 70S ribosome, contacting the 23S rRNA.

Its function is as follows. One of the primary rRNA binding proteins, it binds directly to 16S rRNA where it helps nucleate assembly of the platform of the 30S subunit by binding and bridging several RNA helices of the 16S rRNA. Functionally, forms an intersubunit bridge (bridge B4) with the 23S rRNA of the 50S subunit in the ribosome. The polypeptide is Small ribosomal subunit protein uS15 (Acholeplasma laidlawii (strain PG-8A)).